A 63-amino-acid chain; its full sequence is Large ribosomal subunit protein uL30 (63 aa).

It belongs to the universal ribosomal protein uL30 family. In terms of assembly, part of the 50S ribosomal subunit.

The sequence is that of Large ribosomal subunit protein uL30 from Natranaerobius thermophilus (strain ATCC BAA-1301 / DSM 18059 / JW/NM-WN-LF).